A 226-amino-acid chain; its full sequence is Membrane protein (226 aa).

Topologically, residues 1–11 (MSNGSIPVDEV) are virion surface. The chain crosses the membrane as a helical span at residues 12 to 32 (IEHLRNWNFTWNIILTILLVV). The Intravirion segment spans residues 33 to 41 (LQYGHYKYS). A helical transmembrane segment spans residues 42–62 (VFLYGVKMAILWILWPLVLAL). The Virion surface portion of the chain corresponds to 63–75 (SLFDAWASFQVNW). Residues 76 to 96 (VFFAFSILMACITLMLWIMYF) form a helical membrane-spanning segment. Topologically, residues 97–226 (VNSIRLWRRT…TDSEKVLHLV (130 aa)) are intravirion. The interaction with N protein stretch occupies residues 200–216 (RSKHGDYSAVSNPSAVL).

This sequence belongs to the alphacoronaviruses M protein family. As to quaternary structure, homomultimer. Interacts with envelope E protein in the budding compartment of the host cell, which is located between endoplasmic reticulum and the Golgi complex. Forms a complex with HE and S proteins. Interacts with nucleocapsid N protein. This interaction probably participates in RNA packaging into the virus.

The protein resides in the virion membrane. Its subcellular location is the host Golgi apparatus membrane. In terms of biological role, component of the viral envelope that plays a central role in virus morphogenesis and assembly via its interactions with other viral proteins. The polypeptide is Membrane protein (Sus scrofa (Pig)).